An 810-amino-acid polypeptide reads, in one-letter code: Protein kinase C-binding protein NELL1 (810 aa).

The signal sequence occupies residues 1–21 (MPMDVILVLWFCVCTARTVLG). N-linked (GlcNAc...) asparagine glycans are attached at residues Asn40, Asn53, Asn83, Asn224, Asn294, and Asn372. One can recognise a Laminin G-like domain in the interval 57–227 (AFLFQDVQRE…TQCPNLNRTC (171 aa)). The region spanning 271–332 (KTCQVSGLLY…ISGQCCKVCR (62 aa)) is the VWFC 1 domain. Intrachain disulfides connect Cys395–Cys407, Cys401–Cys416, and Cys418–Cys432. 3 residues coordinate Ca(2+): Asp434, Ile435, and Glu437. The EGF-like 1; calcium-binding domain maps to 434–475 (DIDECAAKMHYCHANTVCVNLPGLYRCDCIPGYIRVDDFSCT). Disulfide bonds link Cys438/Cys451, Cys445/Cys460, Cys462/Cys474, Cys480/Cys493, Cys487/Cys502, Cys504/Cys515, Cys519/Cys529, Cys523/Cys535, Cys537/Cys546, Cys553/Cys566, Cys560/Cys575, Cys577/Cys594, Cys600/Cys613, Cys607/Cys622, and Cys624/Cys630. Ca(2+) is bound by residues Asn453, Leu454, and Leu457. The region spanning 476–516 (EHDDCGSGQHNCDKNAICTNTVQGHSCTCQPGYVGNGTVCK) is the EGF-like 2; calcium-binding domain. Asn511 carries an N-linked (GlcNAc...) asparagine glycan. Residues 517–547 (AFCEEGCRYGGTCVAPNKCVCPSGFTGSHCE) form the EGF-like 3 domain. In terms of domain architecture, EGF-like 4; calcium-binding spans 549-587 (DIDECAEGFVECHNHSRCVNLPGWYHCECRSGFHDDGTY). N-linked (GlcNAc...) asparagine glycosylation is present at Asn562. Positions 596–631 (DIDECALRTHTCWNDSACINLAGGFDCLCPSGPSCS) constitute an EGF-like 5; calcium-binding domain. Asn609 is a glycosylation site (N-linked (GlcNAc...) asparagine). 2 VWFC domains span residues 632–687 (GDCP…PECD) and 692–750 (SQCL…PRCV). Residue Asn708 is glycosylated (N-linked (GlcNAc...) asparagine).

Homotrimer. Binds to PKC beta-1. Interacts with ATRAID; the interaction promotes osteoblast cell differentiation and mineralization. Interacts with ROBO3.

It is found in the cytoplasm. Its subcellular location is the nucleus envelope. The protein localises to the secreted. In terms of biological role, plays a role in the control of cell growth and differentiation. Promotes osteoblast cell differentiation and terminal mineralization. The protein is Protein kinase C-binding protein NELL1 (Nell1) of Mus musculus (Mouse).